Reading from the N-terminus, the 387-residue chain is UDP-N-acetylglucosamine--N-acetylmuramyl-(pentapeptide) pyrophosphoryl-undecaprenol N-acetylglucosamine transferase (387 aa).

UDP-N-acetyl-alpha-D-glucosamine is bound by residues 14–16 (TGG), N124, R167, S195, and Q296. The tract at residues 366–387 (LPQQNSIEEDSTFEKNQEGAVA) is disordered. Residues 377 to 387 (TFEKNQEGAVA) are compositionally biased toward basic and acidic residues.

The protein belongs to the glycosyltransferase 28 family. MurG subfamily.

It is found in the cell inner membrane. It carries out the reaction di-trans,octa-cis-undecaprenyl diphospho-N-acetyl-alpha-D-muramoyl-L-alanyl-D-glutamyl-meso-2,6-diaminopimeloyl-D-alanyl-D-alanine + UDP-N-acetyl-alpha-D-glucosamine = di-trans,octa-cis-undecaprenyl diphospho-[N-acetyl-alpha-D-glucosaminyl-(1-&gt;4)]-N-acetyl-alpha-D-muramoyl-L-alanyl-D-glutamyl-meso-2,6-diaminopimeloyl-D-alanyl-D-alanine + UDP + H(+). It functions in the pathway cell wall biogenesis; peptidoglycan biosynthesis. In terms of biological role, cell wall formation. Catalyzes the transfer of a GlcNAc subunit on undecaprenyl-pyrophosphoryl-MurNAc-pentapeptide (lipid intermediate I) to form undecaprenyl-pyrophosphoryl-MurNAc-(pentapeptide)GlcNAc (lipid intermediate II). This Zymomonas mobilis subsp. mobilis (strain ATCC 31821 / ZM4 / CP4) protein is UDP-N-acetylglucosamine--N-acetylmuramyl-(pentapeptide) pyrophosphoryl-undecaprenol N-acetylglucosamine transferase.